The primary structure comprises 667 residues: Coiled-coil domain-containing protein 154 (667 aa).

Coiled coils occupy residues 76 to 182 (VVEL…QEAG), 215 to 302 (RRVD…GQHE), 384 to 410 (LLRE…SGHL), and 457 to 521 (LRGV…KEDN).

It localises to the early endosome. The protein is Coiled-coil domain-containing protein 154 of Homo sapiens (Human).